Consider the following 133-residue polypeptide: ATP synthase epsilon chain (133 aa).

The protein belongs to the ATPase epsilon chain family. In terms of assembly, F-type ATPases have 2 components, CF(1) - the catalytic core - and CF(0) - the membrane proton channel. CF(1) has five subunits: alpha(3), beta(3), gamma(1), delta(1), epsilon(1). CF(0) has three main subunits: a, b and c.

The protein resides in the cell membrane. Its function is as follows. Produces ATP from ADP in the presence of a proton gradient across the membrane. In Bacillus cereus (strain ATCC 14579 / DSM 31 / CCUG 7414 / JCM 2152 / NBRC 15305 / NCIMB 9373 / NCTC 2599 / NRRL B-3711), this protein is ATP synthase epsilon chain.